Consider the following 445-residue polypeptide: tRNA-2-methylthio-N(6)-dimethylallyladenosine synthase (445 aa).

The MTTase N-terminal domain occupies 3 to 124 (KKLYIKTYGC…LPELISKVVR (122 aa)). 6 residues coordinate [4Fe-4S] cluster: cysteine 12, cysteine 48, cysteine 87, cysteine 162, cysteine 166, and cysteine 169. The Radical SAM core domain occupies 148-380 (YPQGTSAFIS…QQELMAQQLA (233 aa)). The TRAM domain occupies 383-445 (TSCVGSTMKV…SLNSLTGEIL (63 aa)).

The protein belongs to the methylthiotransferase family. MiaB subfamily. As to quaternary structure, monomer. The cofactor is [4Fe-4S] cluster.

It localises to the cytoplasm. The enzyme catalyses N(6)-dimethylallyladenosine(37) in tRNA + (sulfur carrier)-SH + AH2 + 2 S-adenosyl-L-methionine = 2-methylsulfanyl-N(6)-dimethylallyladenosine(37) in tRNA + (sulfur carrier)-H + 5'-deoxyadenosine + L-methionine + A + S-adenosyl-L-homocysteine + 2 H(+). In terms of biological role, catalyzes the methylthiolation of N6-(dimethylallyl)adenosine (i(6)A), leading to the formation of 2-methylthio-N6-(dimethylallyl)adenosine (ms(2)i(6)A) at position 37 in tRNAs that read codons beginning with uridine. This is tRNA-2-methylthio-N(6)-dimethylallyladenosine synthase from Rickettsia rickettsii (strain Iowa).